We begin with the raw amino-acid sequence, 2104 residues long: Transmembrane matrix receptor MUP-4 (2104 aa).

The signal sequence occupies residues 1 to 15 (MRWVPLVLLPLIASA). The Extracellular segment spans residues 16-1860 (ATTYQHRQTY…FCETAPSNLP (1845 aa)). 3 consecutive EGF-like domains span residues 71-110 (VVNE…TSPD), 122-163 (TTNE…VSTS), and 175-213 (SVNE…ASPN). Disulfide bonds link C75–C89, C83–C98, C126–C142, C136–C151, C179–C192, and C186–C201. Positions 220–265 (RVCNKPKAPEYYGQQSRQPQCSEGSGCGPNEECRFNTAGEKVCQCR) constitute a WR1 domain. 3 consecutive EGF-like domains span residues 278–315 (VFSQ…VSPD), 327–360 (VRNE…SNCI), and 377–416 (AANQ…VSSN). 7 disulfides stabilise this stretch: C282–C294, C288–C303, C331–C344, C338–C353, C355–C359, C381–C395, and C389–C404. The region spanning 437 to 612 (DLVFLIDGSG…DLNTRLRSAI (176 aa)) is the VWFA domain. N494 and N556 each carry an N-linked (GlcNAc...) asparagine glycan. 2 consecutive EGF-like domains span residues 728 to 772 (SNDE…NKCE) and 819 to 857 (LIDE…KSPE). 21 disulfide bridges follow: C732–C746, C740–C756, C758–C771, C823–C836, C830–C845, C873–C886, C880–C895, C923–C937, C931–C946, C972–C985, C979–C995, C1020–C1034, C1028–C1046, C1075–C1089, C1083–C1098, C1125–C1139, C1133–C1148, C1173–C1187, C1181–C1196, C1219–C1233, and C1227–C1242. The 39-residue stretch at 869–907 (QRNECLDGTHNCSMNADCIDLPDGFLCRCKEDFVDISPN) folds into the EGF-like 9; calcium-binding domain. N879 carries N-linked (GlcNAc...) asparagine glycosylation. EGF-like domains lie at 919 to 958 (LVNE…HDEL), 968 to 1007 (LNQI…KSPL), 1016 to 1058 (VEPI…VGAV), 1071 to 1110 (LVNE…ESPV), 1121 to 1160 (LVNE…QKPE), 1169 to 1208 (IINE…EMPS), and 1215 to 1254 (RFDE…EISD). N1037 carries N-linked (GlcNAc...) asparagine glycosylation. Residue N1132 is glycosylated (N-linked (GlcNAc...) asparagine). N-linked (GlcNAc...) asparagine glycosylation is found at N1271, N1403, and N1576. 2 consecutive SEA domains span residues 1322–1444 (PTTS…DDAD) and 1495–1620 (AVES…PEQL). 3 consecutive EGF-like domains span residues 1622–1658 (PFSN…LNPS), 1669–1705 (GVNE…YVNS), and 1717–1754 (SIDY…LRKS). 11 disulfides stabilise this stretch: C1626-C1637, C1631-C1646, C1673-C1687, C1681-C1696, C1721-C1733, C1727-C1742, C1776-C1789, C1783-C1798, C1821-C1830, C1824-C1841, and C1843-C1852. N-linked (GlcNAc...) asparagine glycosylation is found at N1730 and N1782. Positions 1772 to 1810 (DIDECALGLHNCSAAAICIDKKIGYECQCQEGYEDGNPS) constitute an EGF-like 20; calcium-binding domain. The region spanning 1817–1853 (AASLCGLCNGHGDCIHDALSSNVTCACLDGYTGQFCE) is the EGF-like 21 domain. N1838 is a glycosylation site (N-linked (GlcNAc...) asparagine). A helical membrane pass occupies residues 1861 to 1881 (LILMTLLALLFLLLTLLCCLY). Residues 1882 to 2104 (MCARCRCFGA…TTKAEEVNYF (223 aa)) lie on the Cytoplasmic side of the membrane. Residues 2031-2040 (SGAMMSSASG) show a composition bias toward low complexity. Positions 2031 to 2104 (SGAMMSSASG…TTKAEEVNYF (74 aa)) are disordered. Basic and acidic residues-rich tracts occupy residues 2062–2076 (VYDR…HDFE) and 2083–2104 (TGTE…VNYF).

Abundant at hypodermal cell-matrix junctions overlying muscle of threefold embryos. Expression continues in body wall muscle in larvae and adults and is also detected in other regions where cells show mechanical attachment to the hypodermis including the inner surface of the pharynx, overlying anal and intestinal muscles, overlying vulval and uterine sex muscles, male tail muscle attachment zones and the six mechanosensory neurons (at protein level).

The protein resides in the cell junction. It localises to the hemidesmosome. It is found in the cytoplasm. Its subcellular location is the cytoskeleton. The protein localises to the cell membrane. Its function is as follows. Required for junctional attachments between hypodermis and muscle, and between the apical epithelial surface and the cuticular matrix. Essential for enclosure of the embryo by the hypodermis, hypodermal integrity, embryo elongation, and maintenance of hypodermal morphology in fully elongated embryos. This Caenorhabditis elegans protein is Transmembrane matrix receptor MUP-4.